The sequence spans 690 residues: Crooked neck-like protein 1 (690 aa).

HAT repeat units lie at residues 61-93 (DYKL…WEES), 95-127 (KEIQ…MEMK), 129-161 (RQVN…MEEM), 163-194 (GNVA…FELR), 196-227 (KEVE…FEEK), 229-264 (AYFA…FEEN), 266-300 (KEFE…FEKK), 310-342 (IIVS…LVES), 344-378 (AEAD…LWVN), 388-424 (KDPE…FEIR), 459-491 (REFD…LETI), 493-527 (GDIE…FEIE), 529-560 (EETE…FELS), 565-606 (GSVA…EFGT), 608-646 (SDKE…YIFP), and 648-673 (DAAN…EREA). The segment at 250–467 (MDEHLYVAFA…LREFDRCRKL (218 aa)) is mediates interaction with HSP90. At serine 342 the chain carries Phosphoserine. The Nuclear localization signal motif lies at 618–626 (PEKVKKRRK). The segment covering 667-679 (QQQEREAAEQDPD) has biased composition (basic and acidic residues). The segment at 667–690 (QQQEREAAEQDPDKDIDESESSSF) is disordered. Residues 680 to 690 (KDIDESESSSF) show a composition bias toward acidic residues. Phosphoserine is present on serine 689.

The protein belongs to the crooked-neck family. As to quaternary structure, identified in the spliceosome C complex. Present in a spliceosome complex assembled in vitro containing CRNKL1, HPRP8BP and SNRPB2. Component of the minor spliceosome, which splices U12-type introns. Interacts with PPIL2 (via the PPIase cyclophilin-type domain); they may form a trimeric complex with HSP90.

It localises to the nucleus. The protein localises to the nucleus speckle. Involved in pre-mRNA splicing process. As a component of the minor spliceosome, involved in the splicing of U12-type introns in pre-mRNAs. The protein is Crooked neck-like protein 1 (Crnkl1) of Mus musculus (Mouse).